A 369-amino-acid polypeptide reads, in one-letter code: Histidinol-phosphate aminotransferase 2 (369 aa).

Lysine 231 bears the N6-(pyridoxal phosphate)lysine mark.

The protein belongs to the class-II pyridoxal-phosphate-dependent aminotransferase family. Histidinol-phosphate aminotransferase subfamily. As to quaternary structure, homodimer. Pyridoxal 5'-phosphate is required as a cofactor.

The catalysed reaction is L-histidinol phosphate + 2-oxoglutarate = 3-(imidazol-4-yl)-2-oxopropyl phosphate + L-glutamate. It participates in amino-acid biosynthesis; L-histidine biosynthesis; L-histidine from 5-phospho-alpha-D-ribose 1-diphosphate: step 7/9. The polypeptide is Histidinol-phosphate aminotransferase 2 (Legionella pneumophila (strain Lens)).